The chain runs to 38 residues: Large ribosomal subunit protein bL36 (38 aa).

Belongs to the bacterial ribosomal protein bL36 family.

The protein is Large ribosomal subunit protein bL36 of Myxococcus xanthus (strain DK1622).